The sequence spans 149 residues: Cytochrome c-type biogenesis protein CcmE (149 aa).

The Cytoplasmic segment spans residues 1–7 (MTRKQKR). The helical; Signal-anchor for type II membrane protein transmembrane segment at 8 to 28 (LAVIAGGMGFIATAVLLVLFA) threads the bilayer. The Periplasmic segment spans residues 29–149 (FSQSVAYFYM…GVWKGEEASQ (121 aa)). Residues histidine 123 and tyrosine 127 each coordinate heme.

It belongs to the CcmE/CycJ family.

It is found in the cell inner membrane. Heme chaperone required for the biogenesis of c-type cytochromes. Transiently binds heme delivered by CcmC and transfers the heme to apo-cytochromes in a process facilitated by CcmF and CcmH. This chain is Cytochrome c-type biogenesis protein CcmE, found in Rhizobium rhizogenes (strain K84 / ATCC BAA-868) (Agrobacterium radiobacter).